The following is a 210-amino-acid chain: Dof zinc finger protein DOF4.4 (210 aa).

The Dof-type zinc-finger motif lies at 24–78; that stretch reads RVCPRCDSDNTKFCFYNNYSESQPRYFCKNCRRYWTHGGALRNIPVGGSCRKPKR. Zn(2+) contacts are provided by Cys26, Cys29, Cys51, and Cys54.

It is found in the nucleus. Its function is as follows. Transcription factor that binds specifically to a 5'-AA[AG]G-3' consensus core sequence. This is Dof zinc finger protein DOF4.4 (DOF4.4) from Arabidopsis thaliana (Mouse-ear cress).